Consider the following 206-residue polypeptide: MSFLSIFTFFSVLISVATTVRFDLTNVTCKGLHGPHCGTYVMEVVGQNGTFLGQSTFVGADVLTESAGDAWARYLGQETRFLPKLTTIASNETKNFSPLIFTTNINTCNPQSIGDAMVPFANTVTGEIEYNSWADTADNASFITGLANQLFNSTDYGVQVASCYPNFASVILSTPAVNIFGKDDTLPDYCTAIQLKAVCPPEAGFD.

The N-terminal stretch at 1-19 (MSFLSIFTFFSVLISVATT) is a signal peptide. N-linked (GlcNAc...) asparagine glycosylation is found at asparagine 26, asparagine 48, asparagine 91, asparagine 139, and asparagine 152.

This sequence belongs to the VEL1 family. In terms of processing, N-glycosylated.

Its subcellular location is the cytoplasm. The protein localises to the cytosol. This Saccharomyces cerevisiae (strain ATCC 204508 / S288c) (Baker's yeast) protein is Protein VEL1 (VEL1).